We begin with the raw amino-acid sequence, 244 residues long: Na(+)-translocating NADH-quinone reductase subunit E (244 aa).

The next 6 membrane-spanning stretches (helical) occupy residues 11–31, 50–70, 90–110, 123–143, 153–173, and 191–211; these read LLGIFLQATFIQNILLSTFLG, MSVALVLTITGSINWLVHYFI, FLELIMFIVVIAAFTQILELL, GIFLPLIAVNCAILGGVLFGI, VVFSLGSGCGWWLAIVLFATI, and ISFITTGLMAMAFMGLTGIDI.

This sequence belongs to the NqrDE/RnfAE family. As to quaternary structure, composed of six subunits; NqrA, NqrB, NqrC, NqrD, NqrE and NqrF.

It localises to the cell inner membrane. It catalyses the reaction a ubiquinone + n Na(+)(in) + NADH + H(+) = a ubiquinol + n Na(+)(out) + NAD(+). Its function is as follows. NQR complex catalyzes the reduction of ubiquinone-1 to ubiquinol by two successive reactions, coupled with the transport of Na(+) ions from the cytoplasm to the periplasm. NqrA to NqrE are probably involved in the second step, the conversion of ubisemiquinone to ubiquinol. The polypeptide is Na(+)-translocating NADH-quinone reductase subunit E (Chlamydia trachomatis serovar L2 (strain ATCC VR-902B / DSM 19102 / 434/Bu)).